The primary structure comprises 357 residues: uncharacterized protein (357 aa).

Residues Leu27–Ala196 form the PNPLA domain. The GXGXXG signature appears at Gly31–Gly36. The short motif at Gly59–Gly63 is the GXSXG element. Residue Ser61 is the Nucleophile of the active site. Asp183 acts as the Proton acceptor in catalysis. The short motif at Asp183–Gly185 is the DGA/G element.

Its function is as follows. Probable lipid hydrolase. This is an uncharacterized protein from Escherichia coli (strain K12).